Here is a 364-residue protein sequence, read N- to C-terminus: Alanine racemase (364 aa).

The active-site Proton acceptor; specific for D-alanine is the Lys34. Lys34 carries the N6-(pyridoxal phosphate)lysine modification. Arg129 contacts substrate. Tyr259 functions as the Proton acceptor; specific for L-alanine in the catalytic mechanism. Met307 contacts substrate.

This sequence belongs to the alanine racemase family. Requires pyridoxal 5'-phosphate as cofactor.

The enzyme catalyses L-alanine = D-alanine. It participates in amino-acid biosynthesis; D-alanine biosynthesis; D-alanine from L-alanine: step 1/1. In terms of biological role, catalyzes the interconversion of L-alanine and D-alanine. May also act on other amino acids. This chain is Alanine racemase (alr), found in Coxiella burnetii (strain Dugway 5J108-111).